The chain runs to 1084 residues: Ribonucleoside-diphosphate reductase NrdEB subunit alpha (1084 aa).

Residues Thr-152, 168–169 (SC), and Gly-197 each bind substrate. Residues Cys-169 and Cys-793 are joined by a disulfide bond. Asn-379 functions as the Proton acceptor in the catalytic mechanism. The active-site Cysteine radical intermediate is Cys-381. The 152-residue stretch at 503 to 654 (IMGIIAGDGT…VQKLLLNMGV (152 aa)) folds into the DOD-type homing endonuclease domain. The active-site Proton acceptor is the Glu-768. Residue 964–968 (PTGSI) coordinates substrate.

Belongs to the ribonucleoside diphosphate reductase large chain family. As to quaternary structure, tetramer of two alpha and two beta subunits. This protein undergoes protein self-splicing that involves post-translational excision of the intervening region (intein) followed by peptide ligation.

It catalyses the reaction a 2'-deoxyribonucleoside 5'-diphosphate + [thioredoxin]-disulfide + H2O = a ribonucleoside 5'-diphosphate + [thioredoxin]-dithiol. Under complex allosteric control mediated by deoxynucleoside triphosphates and ATP binding. The type of nucleotide bound at the specificity site determines substrate preference. It seems probable that ATP makes the enzyme reduce CDP and UDP, dGTP favors ADP reduction and dTTP favors GDP reduction. Its function is as follows. Provides the precursors necessary for DNA synthesis. Catalyzes the biosynthesis of deoxyribonucleotides from the corresponding ribonucleotides. This is Ribonucleoside-diphosphate reductase NrdEB subunit alpha (nrdEB) from Bacillus subtilis (strain 168).